The primary structure comprises 402 residues: Palmitoyltransferase PFA4 (402 aa).

Over methionine 1–proline 8 the chain is Cytoplasmic. Residues isoleucine 9–phenylalanine 29 form a helical membrane-spanning segment. The Lumenal segment spans residues valine 30 to glutamate 39. The chain crosses the membrane as a helical span at residues glutamine 40–valine 60. At aspartate 61–arginine 125 the chain is on the cytoplasmic side. Residues arginine 78–phenylalanine 128 enclose the DHHC domain. Cysteine 108 (S-palmitoyl cysteine intermediate) is an active-site residue. Residues phenylalanine 126 to leucine 146 traverse the membrane as a helical segment. The Lumenal segment spans residues histidine 147 to cysteine 165. A helical transmembrane segment spans residues alanine 166 to valine 186. The Cytoplasmic portion of the chain corresponds to arginine 187 to asparagine 402.

Belongs to the DHHC palmitoyltransferase family. PFA4 subfamily.

It is found in the endoplasmic reticulum membrane. The catalysed reaction is L-cysteinyl-[protein] + hexadecanoyl-CoA = S-hexadecanoyl-L-cysteinyl-[protein] + CoA. Functionally, mediates the reversible addition of palmitate to target proteins, thereby regulating their membrane association and biological function. This chain is Palmitoyltransferase PFA4, found in Debaryomyces hansenii (strain ATCC 36239 / CBS 767 / BCRC 21394 / JCM 1990 / NBRC 0083 / IGC 2968) (Yeast).